We begin with the raw amino-acid sequence, 474 residues long: tRNA modification GTPase MnmE (474 aa).

3 residues coordinate (6S)-5-formyl-5,6,7,8-tetrahydrofolate: R23, E86, and K125. One can recognise a TrmE-type G domain in the interval 221-396 (GIPVAIVGEP…LKEKLLEYVN (176 aa)). Residue N231 coordinates K(+). Residues 231 to 236 (NVGKST), 250 to 256 (SEIAGTT), and 275 to 278 (DTAG) each bind GTP. Mg(2+) is bound at residue S235. S250, I252, and T255 together coordinate K(+). A Mg(2+)-binding site is contributed by T256. Position 474 (K474) interacts with (6S)-5-formyl-5,6,7,8-tetrahydrofolate.

The protein belongs to the TRAFAC class TrmE-Era-EngA-EngB-Septin-like GTPase superfamily. TrmE GTPase family. In terms of assembly, homodimer. Heterotetramer of two MnmE and two MnmG subunits. Requires K(+) as cofactor.

It localises to the cytoplasm. Exhibits a very high intrinsic GTPase hydrolysis rate. Involved in the addition of a carboxymethylaminomethyl (cmnm) group at the wobble position (U34) of certain tRNAs, forming tRNA-cmnm(5)s(2)U34. The protein is tRNA modification GTPase MnmE of Christiangramia forsetii (strain DSM 17595 / CGMCC 1.15422 / KT0803) (Gramella forsetii).